Consider the following 184-residue polypeptide: Photosystem I assembly protein Ycf4 (184 aa).

2 helical membrane-spanning segments follow: residues 19–39 (ISNF…LLVG) and 57–77 (IIFF…LFIS).

It belongs to the Ycf4 family.

It localises to the plastid. It is found in the chloroplast thylakoid membrane. Functionally, seems to be required for the assembly of the photosystem I complex. The sequence is that of Photosystem I assembly protein Ycf4 from Cucumis sativus (Cucumber).